The sequence spans 430 residues: Glial fibrillary acidic protein (430 aa).

Positions 1–69 are head; sequence MERRRITSAR…KETRASERAE (69 aa). Thr-7 is subject to Phosphothreonine; by AURKB and ROCK1. Residue Arg-11 is modified to Omega-N-methylarginine. Residue Ser-12 is modified to Phosphoserine; by AURKB and ROCK1. An Omega-N-methylarginine modification is found at Arg-20. Arg-33 carries the citrulline modification. Phosphoserine; by AURKB and ROCK1 is present on Ser-35. A Phosphothreonine modification is found at Thr-40. Positions 66–374 constitute an IF rod domain; sequence ERAEMMELND…KLLEGEENRI (309 aa). A coil 1A region spans residues 70–101; it reads MMELNDRFASYIEKVRFLEQQNKALAAELNQL. Residue Ser-79 is modified to Phosphoserine. The interval 102-112 is linker 1; that stretch reads RAKEPTKLADV. Thr-107 and Thr-147 each carry phosphothreonine. The tract at residues 113-211 is coil 1B; the sequence is YQAELRELRL…EEEVRELREQ (99 aa). The linker 12 stretch occupies residues 212-227; the sequence is LAQQQVHVEMDVAKPD. Residues 228–249 are coil 2A; that stretch reads LTAALREIRTQYEAVATSNMQE. The linker 2 stretch occupies residues 250–253; it reads TEEW. Residues 254-374 are coil 2B; it reads YRSKFADLTD…KLLEGEENRI (121 aa). Residue Ser-266 is modified to Phosphoserine. Position 267 is a citrulline (Arg-267). Ser-320 carries the phosphoserine modification. A tail region spans residues 375–430; that stretch reads TIPVQTFSNLQIRETSLDTKSVSEGHLKRNIVVKTVEMRDGEVIKDSKQEHKDVVM. Thr-380 is subject to Phosphothreonine. Ser-382 carries the post-translational modification Phosphoserine. Citrulline is present on residues Arg-403 and Arg-413.

It belongs to the intermediate filament family. As to quaternary structure, interacts with SYNM. Interacts with PSEN1 (via N-terminus). In terms of processing, phosphorylated by PKN1. Brain; isoform 2 expressed at 20-fold lower level than isoform 1.

The protein resides in the cytoplasm. Its function is as follows. GFAP, a class-III intermediate filament, is a cell-specific marker that, during the development of the central nervous system, distinguishes astrocytes from other glial cells. The sequence is that of Glial fibrillary acidic protein (Gfap) from Mus musculus (Mouse).